Here is a 1732-residue protein sequence, read N- to C-terminus: Transient receptor potential cation channel subfamily M member 3 (1732 aa).

Residues 1-894 (MPGPWGTVYF…RKIYEFYNAP (894 aa)) are Cytoplasmic-facing. Calmodulin-binding regions lie at residues 41–64 (WTIRKLCHAAFLPSVRLLKAQKSW), 192–215 (NFELQPKLKQVFGKGLIKAAMTTG), 300–323 (TGKYGAEVKLRRQLEKHISLQKIN), 601–624 (RKRFRTLYHNLFGPKRPKALKLLG), and 793–816 (RKNSGLKVILGILLPPSILSLEFK). A required for the inhibitory action of G-beta/gamma-subunits of heterotrimeric G-proteins region spans residues 617–625 (PKALKLLGM). S796 provides a ligand contact to 1,2-dioctanoyl-sn-glycero-3-phospho-(1D-myo-inositol-4,5-bisphosphate). The segment at 829 to 851 (EIHLQEKEPEEPEKPTKEKDEED) is disordered. Over residues 831–847 (HLQEKEPEEPEKPTKEK) the composition is skewed to basic and acidic residues. Residues 895-918 (IVKFWFYTLAYIGYLMLFNYIVLV) form a helical membrane-spanning segment. Residues 919–925 (KMERWPS) are Extracellular-facing. A helical transmembrane segment spans residues 926–948 (TQEWIVISYIFTLGIEKMREILM). Topologically, residues 949–964 (SEPGKLLQKVKVWLQE) are cytoplasmic. A helical transmembrane segment spans residues 965-985 (YWNVTDLIAILLFSVGMILRL). Over 986 to 989 (QDQP) the chain is Extracellular. The chain crosses the membrane as a helical span at residues 990–1013 (FRSDGRVIYCVNIIYWYIRLLDIF). The Cytoplasmic segment spans residues 1014–1028 (GVNKYLGPYVMMIGK). 1,2-dioctanoyl-sn-glycero-3-phospho-(1D-myo-inositol-4,5-bisphosphate)-binding residues include K1017 and Y1018. The helical transmembrane segment at 1029-1056 (MMIDMMYFVIIMLVVLMSFGVARQAILF) threads the bilayer. Residues 1057 to 1073 (PNEEPSWKLAKNIFYMP) lie on the Extracellular side of the membrane. Positions 1074–1101 (YWMIYGEVFADQIDPPCGQNETREDGKT) form an intramembrane region, pore-forming. Residues 1102–1111 (IQLPPCKTGA) are Extracellular-facing. The chain crosses the membrane as a helical span at residues 1112–1137 (WIVPAIMACYLLVANILLVNLLIAVF). At 1138–1732 (NNTFFEVKSI…AFHSFESKHN (595 aa)) the chain is on the cytoplasmic side. The segment at 1610 to 1732 (EREAELSHPS…AFHSFESKHN (123 aa)) is disordered. 2 stretches are compositionally biased toward polar residues: residues 1635–1653 (PISSQEAENADRTLSNNIT) and 1690–1701 (NTASLRNPFQRS).

Belongs to the transient receptor (TC 1.A.4) family. LTrpC subfamily. TRPM3 sub-subfamily. In terms of assembly, homotetramer. Interacts with TRPM1; the interaction results in the formation of a heteromultimeric cation channel complex that are functionally different from the homomeric channels.

The protein resides in the cell membrane. It carries out the reaction Ca(2+)(in) = Ca(2+)(out). The enzyme catalyses Mn(2+)(in) = Mn(2+)(out). It catalyses the reaction Zn(2+)(in) = Zn(2+)(out). The catalysed reaction is Mg(2+)(in) = Mg(2+)(out). It carries out the reaction Na(+)(in) = Na(+)(out). Activated by the neurosteroid pregnelonone sulfate (PregS). PregS activates the channel by shifting its current-voltage activation curve toward more negative membrane potentials and also potentiates temperature-induced activation. Activated by heat. Intracellular Ca(2+) inhibits TRPM3 probably via interaction with Ca(2+)/calmodulin. Intracellular Mg(2+) inhibits TRPM3 activity. Both intracellular and extracellular protons block TRPM3 through propable binding sites in the pore region. Positively regulated by phosphoinositide phosphoinositol 4,5-biphosphate (PI(4,5)P2). Strongly inhibited by activation of G(i)-coupled receptors via direct binding with G-beta/gamma-subunits of heterotrimeric G-proteins. Its activity is regulated as follows. Insensitive to pregnenolone sulfate (PregS) or heat. With respect to regulation, not inhibited by G-beta/gamma-subunits of heterotrimeric G-proteins. In terms of biological role, constitutively active, non-selective divalent cation-conducting channel that is permeable to Ca(2+), Mn(2+), and Mg(2+), with a high permeability for Ca(2+). However, can be enhanced by increasing temperature and by ligands, including the endogenous neurosteroid pregnenolone sulfate and sphingosine-1 and suppressed by intracellular Mg(2+). Implicated in a variety of cellular processes, including insulin/peptide secretion, vascular constriction and dilation, noxious heat sensing, inflammatory and spontaneous pain sensitivity. In neurons of the dorsal root ganglia, functions as thermosensitive channel for the detection of noxious heat and spontaneous pain. Suggested to function as an ionotropic steroid receptor in beta-cell, indeed pregnenolone sulfate leads to Ca(2+) influx and enhanced insulin secretion. Mediates Zn(2+) uptake into the lumen of pancreatic beta cell secretory granules, thereby regulating insulin secretion. Forms heteromultimeric ion channels with TRPM1 which are permeable for Ca(2+) and Zn(2+) ions. Exists as multiple splice variants which differ significantly in their biophysical properties. Functionally, displays strongly reduced permeability for divalent cations and high selectivity toward monovalent cations. Its function is as follows. No channel activity. In Mus musculus (Mouse), this protein is Transient receptor potential cation channel subfamily M member 3.